A 219-amino-acid chain; its full sequence is uncharacterized protein (219 aa).

A signal peptide spans 1 to 17; sequence MFKKIIILFLGIFLLSS. Cysteine 18 is lipidated: N-palmitoyl cysteine. Cysteine 18 carries S-diacylglycerol cysteine lipidation. A disordered region spans residues 110–136; it reads KAESNATQSNNDMTLSKANKKVRKDDS. Polar residues predominate over residues 112–126; that stretch reads ESNATQSNNDMTLSK. Residues 137–165 are a coiled coil; it reads YKEKKIEEELNQIKAMLRETKRDITKYTC.

Its subcellular location is the cell membrane. This is an uncharacterized protein from Rickettsia prowazekii (strain Madrid E).